Reading from the N-terminus, the 82-residue chain is Large ribosomal subunit protein bL31B (82 aa).

This sequence belongs to the bacterial ribosomal protein bL31 family. Type B subfamily. In terms of assembly, part of the 50S ribosomal subunit after the end of exponential growth.

In terms of biological role, while neither of the L31 paralogs is essential, this protein does not seem to function as the main L31 protein. Has a higher affinity for 70S ribosomes than the zinc-containing L31 paralog; is able to displace it to varying extents, even under zinc-replete conditions. The protein is Large ribosomal subunit protein bL31B (rpmE2) of Bacillus subtilis (strain 168).